Consider the following 311-residue polypeptide: VQ motif-containing protein 9 (311 aa).

A compositionally biased stretch (low complexity) spans 1 to 27 (MDKSCNSSGDSSAVSASATSSTGNNTT). The interval 1 to 78 (MDKSCNSSGD…QINQGNLHQH (78 aa)) is disordered. The VQ signature appears at 90-99 (FRDVVQKLTG). 3 disordered regions span residues 103–125 (HERISAPPQQPIHHPKPQQSSRL), 228–266 (QQENAPPSQHNSFPPPHPPPPSSAVSQTVPTSIPAPPLF), and 290–311 (GQLGFPVSPTTVPLPSPKYKGH). Pro residues predominate over residues 240–249 (FPPPHPPPPS). The span at 290–302 (GQLGFPVSPTTVP) shows a compositional bias: low complexity.

In terms of assembly, interacts (via N-terminus) with WRKY8. In terms of tissue distribution, highly expressed in roots and at lower levels in rosette leaves, cauline leaves, stems, flowers and siliques.

The protein resides in the nucleus. Functionally, functions as a negative regulator of salt stress response. Functions as a repressor of WRKY8 transcription factor by decreasing the DNA-binding activity of WRKY8 and acts antagonistically with WRKY8 to regulate sodium and potassium homeostasis under salt stress. This is VQ motif-containing protein 9 from Arabidopsis thaliana (Mouse-ear cress).